Reading from the N-terminus, the 488-residue chain is Glutamyl-tRNA(Gln) amidotransferase subunit A (488 aa).

Active-site charge relay system residues include Lys77 and Ser152. The active-site Acyl-ester intermediate is the Ser176.

Belongs to the amidase family. GatA subfamily. As to quaternary structure, heterotrimer of A, B and C subunits.

The catalysed reaction is L-glutamyl-tRNA(Gln) + L-glutamine + ATP + H2O = L-glutaminyl-tRNA(Gln) + L-glutamate + ADP + phosphate + H(+). In terms of biological role, allows the formation of correctly charged Gln-tRNA(Gln) through the transamidation of misacylated Glu-tRNA(Gln) in organisms which lack glutaminyl-tRNA synthetase. The reaction takes place in the presence of glutamine and ATP through an activated gamma-phospho-Glu-tRNA(Gln). This Streptococcus pyogenes serotype M18 (strain MGAS8232) protein is Glutamyl-tRNA(Gln) amidotransferase subunit A.